Here is a 417-residue protein sequence, read N- to C-terminus: Serine hydroxymethyltransferase (417 aa).

(6S)-5,6,7,8-tetrahydrofolate contacts are provided by residues L117 and 121–123; that span reads GHL. An N6-(pyridoxal phosphate)lysine modification is found at K226.

Belongs to the SHMT family. Homodimer. It depends on pyridoxal 5'-phosphate as a cofactor.

The protein resides in the cytoplasm. It catalyses the reaction (6R)-5,10-methylene-5,6,7,8-tetrahydrofolate + glycine + H2O = (6S)-5,6,7,8-tetrahydrofolate + L-serine. The protein operates within one-carbon metabolism; tetrahydrofolate interconversion. It participates in amino-acid biosynthesis; glycine biosynthesis; glycine from L-serine: step 1/1. Catalyzes the reversible interconversion of serine and glycine with tetrahydrofolate (THF) serving as the one-carbon carrier. This reaction serves as the major source of one-carbon groups required for the biosynthesis of purines, thymidylate, methionine, and other important biomolecules. Also exhibits THF-independent aldolase activity toward beta-hydroxyamino acids, producing glycine and aldehydes, via a retro-aldol mechanism. This chain is Serine hydroxymethyltransferase, found in Syntrophus aciditrophicus (strain SB).